A 597-amino-acid polypeptide reads, in one-letter code: Leishmanolysin (597 aa).

A signal peptide spans 1–39 (MSVDSSSTHRHRCVAARLVPLAAAGAAVTVAVGTAAAWA). The propeptide at 40–99 (HAGAVQHRCIHDAMQARVRQSVAAQRMAPSAVSAVGLPHVTLDAGNTAAGADPSTGTANV) is activation peptide. 2 cysteine pairs are disulfide-bonded: cysteine 124-cysteine 141 and cysteine 190-cysteine 229. Residue histidine 263 participates in Zn(2+) binding. Glutamate 264 is an active-site residue. Position 267 (histidine 267) interacts with Zn(2+). Residue asparagine 299 is glycosylated (N-linked (GlcNAc...) asparagine). Cystine bridges form between cysteine 313-cysteine 383, cysteine 390-cysteine 452, cysteine 403-cysteine 422, cysteine 412-cysteine 486, cysteine 463-cysteine 507, cysteine 512-cysteine 562, and cysteine 532-cysteine 555. Histidine 332 lines the Zn(2+) pocket. A glycan (N-linked (GlcNAc...) asparagine) is linked at asparagine 404. Asparagine 574 carries GPI-anchor amidated asparagine lipidation. A propeptide spans 575–597 (AAGRRGPRAATALVVAALLAVAL) (removed in mature form).

The protein belongs to the peptidase M8 family. The cofactor is Zn(2+).

The protein resides in the cell membrane. It carries out the reaction Preference for hydrophobic residues at P1 and P1' and basic residues at P2' and P3'. A model nonapeptide is cleaved at -Ala-Tyr-|-Leu-Lys-Lys-.. Functionally, has an integral role during the infection of macrophages in the mammalian host. The chain is Leishmanolysin (gp63) from Leishmania amazonensis.